The sequence spans 182 residues: ATP synthase subunit delta (182 aa).

Belongs to the ATPase delta chain family. In terms of assembly, F-type ATPases have 2 components, F(1) - the catalytic core - and F(0) - the membrane proton channel. F(1) has five subunits: alpha(3), beta(3), gamma(1), delta(1), epsilon(1). F(0) has three main subunits: a(1), b(2) and c(10-14). The alpha and beta chains form an alternating ring which encloses part of the gamma chain. F(1) is attached to F(0) by a central stalk formed by the gamma and epsilon chains, while a peripheral stalk is formed by the delta and b chains.

It is found in the cell inner membrane. Its function is as follows. F(1)F(0) ATP synthase produces ATP from ADP in the presence of a proton or sodium gradient. F-type ATPases consist of two structural domains, F(1) containing the extramembraneous catalytic core and F(0) containing the membrane proton channel, linked together by a central stalk and a peripheral stalk. During catalysis, ATP synthesis in the catalytic domain of F(1) is coupled via a rotary mechanism of the central stalk subunits to proton translocation. This protein is part of the stalk that links CF(0) to CF(1). It either transmits conformational changes from CF(0) to CF(1) or is implicated in proton conduction. In Sulfurihydrogenibium azorense (strain DSM 15241 / OCM 825 / Az-Fu1), this protein is ATP synthase subunit delta.